Consider the following 50-residue polypeptide: Nosiheptide precursor (50 aa).

Positions 38-39 form a cross-link, thiazole-4-carboxylic acid (Ser-Cys); it reads SC. Residues 38 to 46 constitute a cross-link (3-hydroxypyridine-2,5-dicarboxylic acid (Ser-Cys) (with S-47)); it reads SCTTCECCC. The 3-hydroxypyridine-2,5-dicarboxylic acid (Ser-Ser) (with C-46) cross-link spans 38-47; sequence SCTTCECCCS. The thiazole-4-carboxylic acid (Thr-Cys) cross-link spans 41–42; the sequence is TC. Residue E43 is modified to 4-hydroxyglutamate. A cross-link (thiazole-4-carboxylic acid (Glu-Cys)) is located at residues 43 to 44; it reads EC. The 2-(cystein-S-ylcarbonyl)-3-methyl-4-(glutam-5-yloxy)methylindole (Glu-Cys) cross-link spans 43–45; that stretch reads ECC. The thiazole-4-carboxylic acid (Cys-Cys) cross-link spans 45–46; sequence CC. The thiazole-4-carboxylic acid (Ser-Cys) cross-link spans 47-48; it reads SC. Residue S49 is modified to 2,3-didehydroalanine (Ser). Position 49 is a serine amide; atypical (S49).

It belongs to the thiocillin family. The amidation of Ser-49 is produced by the oxidative cleavage of Ser-50 rather than of a glycine, as in eukaryotes.

Inhibits bacterial protein biosynthesis by binding to ribosomes. Specifically, binds to the complex of 23S rRNA and ribosomal protein L11 (RPLK) in the 50S ribosomal subunit. While allowing a weak binding of elongation factor G (EF-G) to the ribosome and subsequent GTP-hydrolysis, probably impairs conformational changes in both the ribosome and EF-G which are necessary for translocation. In vitro, inhibits Gram-positive bacteria S.aureus strain 209P (MIC=0.0009 ug/ml), S.aureus strain 133 (MIC=0.0019 ug/ml), S.aureus strain B3 (MIC=0.003 ug/ml), S.aureus strain Hb (MIC=0.003 ug/ml), M.citreus strain ATCC 8411 (MIC=0.0038 ug/ml), M.lysodeikticus strain ATCC 4698 (MIC=0.003 ug/ml), S.lutea strain ATCC 9341 (MIC=0.0011 ug/ml), S.faecalis strain ATCC 9790 (MIC=0.0007 ug/ml), S.viridans (MIC=0.0065 ug/ml), S.pyogenes hemolyticus strain Dig7 (MIC=0.00028 ug/ml), D.pneumoniae strain Til (MIC=0.00015 ug/ml), N.catrrhalis (MIC=0.0017 ug/ml), L.casei strain ATCC 6633 (MIC=0.003 ug/ml), B.cereus strain ATCC 6630 (MIC=0.0071 ug/ml) and various isolates of L.monocytogenes. In vitro, inhibits Gram-negative bacterium P.multocida strain A125 (MIC=0.0024 ug/ml) but not M.smegmatis strain ATCC 6630, S.typhimurium, A.aerogenes strain ATCC 8308, P.vulgaris, K.pneumoniae strain ATCC 10031, S.marcescens strain A476, P.aeruginosa strain Bass or B.bronchiseptica strain CN387. Does not inhibit Gram-negative bacterium E.coli strain ATCC 9637 but does inhibit purified ribosomes from E.coli. In vivo, has no systemic effect in mice infected with staphylococci or streptococci when applied orally or subcutaneously. Has a local effect in mice infected subcutaneously or intraperitoneally with staphylococci when applied immediately afterwards. Is not toxic to mice. The protein is Nosiheptide precursor of Streptomyces actuosus.